We begin with the raw amino-acid sequence, 168 residues long: Photosystem I assembly protein Ycf3 (168 aa).

TPR repeat units follow at residues 35 to 68 (AFTY…EIDP), 72 to 105 (SYIL…NPFL), and 120 to 153 (GEQA…TPGN).

Belongs to the Ycf3 family.

It localises to the plastid. It is found in the chloroplast thylakoid membrane. Functionally, essential for the assembly of the photosystem I (PSI) complex. May act as a chaperone-like factor to guide the assembly of the PSI subunits. This Lactuca sativa (Garden lettuce) protein is Photosystem I assembly protein Ycf3.